The primary structure comprises 308 residues: MSESNKSQASATPCPPDKIVFDEERGEYICTETGEVIEERAIDQGPEWRAFTPEEKEKRSRVGGPLNQTIHDMGISTVIDWKDKDAMGRTLDPKRRLEVLRWRKWQIRARIQSSIDRNLAQAMNELERIGNLLNLPKAVKDEAALIYRKAVEKGLVRGRSIESVVAASIYAACRRMKMARTLDEIAQFTKANRKEVARCYRLILRELDINVPVSDPKDYVTRIGSLLGLSGSTMKMAIDIIEKAKESGLTAGKDPAGLAAAAIYIAALLNDERRTQKEIAQIAGVTEVTVRNRYKELTQELKIQIPNQ.

2 consecutive repeat copies span residues 124–207 and 218–299.

Belongs to the TFIIB family.

Its function is as follows. Stabilizes TBP binding to an archaeal box-A promoter. Also responsible for recruiting RNA polymerase II to the pre-initiation complex (DNA-TBP-TFIIB). The polypeptide is Transcription initiation factor IIB (Sulfurisphaera tokodaii (strain DSM 16993 / JCM 10545 / NBRC 100140 / 7) (Sulfolobus tokodaii)).